A 154-amino-acid polypeptide reads, in one-letter code: UPF0260 protein NTHI1811 (154 aa).

This sequence belongs to the UPF0260 family.

In Haemophilus influenzae (strain 86-028NP), this protein is UPF0260 protein NTHI1811.